The sequence spans 610 residues: Putative protein tag-250 (610 aa).

Tudor domains follow at residues 149 to 260 (VALK…LLPP) and 386 to 506 (MPMS…KIGG).

The chain is Putative protein tag-250 (tag-250) from Caenorhabditis elegans.